A 397-amino-acid polypeptide reads, in one-letter code: MQKQNIVILGSTGSIGKSTLSVIENNPQKYHAFALVGGKNVEAMFEQCIKFRPHFAALDDVNAAKILREKLIAHHIPTKVLAGRRAICELAAHPDADQIMASIVGAAGLLPTLSAVKAGKRVLLANKESLVTCGQLFIDAVKNYGSKLLPVDSEHNAIFQSLPPEAQEKIGFCPLSELGVSKIILTGSGGPFRYTPLEQFTNITPEQAVAHPNWSMGKKISVDSATMMNKGLEYIEARWLFNASAEEMEVIIHPQSIIHSMVRYVDGSVIAQMGNPDMRTPIAETMAYPHRTFAGVEPLDFFKIKELTFIEPDFNRYPNLKLAIDAFAAGQYATTAMNAANEIAVQAFLDRQISFMDIAKINSKTIERISPYTIQNIDDVLEIDAQAREIAKTLIRE.

8 residues coordinate NADPH: T12, G13, S14, I15, G38, K39, N40, and N126. K127 serves as a coordination point for 1-deoxy-D-xylulose 5-phosphate. Position 128 (E128) interacts with NADPH. Position 152 (D152) interacts with Mn(2+). Positions 153, 154, 188, and 211 each coordinate 1-deoxy-D-xylulose 5-phosphate. E154 is a Mn(2+) binding site. G217 is an NADPH binding site. 1-deoxy-D-xylulose 5-phosphate-binding residues include S224, N229, K230, and E233. E233 serves as a coordination point for Mn(2+).

It belongs to the DXR family. It depends on Mg(2+) as a cofactor. Requires Mn(2+) as cofactor.

It catalyses the reaction 2-C-methyl-D-erythritol 4-phosphate + NADP(+) = 1-deoxy-D-xylulose 5-phosphate + NADPH + H(+). The protein operates within isoprenoid biosynthesis; isopentenyl diphosphate biosynthesis via DXP pathway; isopentenyl diphosphate from 1-deoxy-D-xylulose 5-phosphate: step 1/6. In terms of biological role, catalyzes the NADPH-dependent rearrangement and reduction of 1-deoxy-D-xylulose-5-phosphate (DXP) to 2-C-methyl-D-erythritol 4-phosphate (MEP). The protein is 1-deoxy-D-xylulose 5-phosphate reductoisomerase of Haemophilus influenzae (strain 86-028NP).